We begin with the raw amino-acid sequence, 342 residues long: RNA 3'-terminal phosphate cyclase (342 aa).

It belongs to the RNA 3'-terminal cyclase family. Type 1 subfamily.

It localises to the cytoplasm. It catalyses the reaction a 3'-end 3'-phospho-ribonucleotide-RNA + GTP = a 3'-end 2',3'-cyclophospho-ribonucleotide-RNA + GMP + diphosphate. Inhibited by GMP. Functionally, catalyzes the GTP-dependent conversion of 3'-phosphate to a 2',3'-cyclic phosphodiester at the end of RNA. The biological role of this enzyme is unknown but it is likely to function in some aspects of cellular RNA processing. The sequence is that of RNA 3'-terminal phosphate cyclase from Pyrococcus furiosus (strain ATCC 43587 / DSM 3638 / JCM 8422 / Vc1).